Reading from the N-terminus, the 388-residue chain is MELKSIKDAFDRVATKQKLSYSKTNEIVHMLSQEIDKALSILEETPSSDTMLLDHRSILADVKKVFMEIAPITQLEATEKELHAALTKYPKVLEKQLNPDISKAYRHNVEFDTHIVNQIIANFFYRQGMFDIGDCFVAETGESECSTRQSFVEMYRILEAMKRRDLEPALNWAVSNSDKLKEARSDLEMKLHSLHFLEIARGKNSKEAIDYARKHIATFADSCLPEIQKLMCSLLWNRKLDKSPYSEFLSPALWNNAVKELTRQYCNLLGESSESPLSITVTAGTQALPVLLKYMNVVMANKKLDWQTMEQLPVDAQLSEEFQFHSVFVCPVSKEQSSDDNPPMMMSCGHVLCKQTINKMSKNGSKSSFKCPYCPTDVDISRCRQLHF.

The 33-residue stretch at 112 to 144 (DTHIVNQIIANFFYRQGMFDIGDCFVAETGESE) folds into the LisH domain. Residues 150-207 (SFVEMYRILEAMKRRDLEPALNWAVSNSDKLKEARSDLEMKLHSLHFLEIARGKNSKE) enclose the CTLH domain. The RING-Gid-type zinc-finger motif lies at 330–374 (CPVSKEQSSDDNPPMMMSCGHVLCKQTINKMSKNGSKSSFKCPYC).

In terms of assembly, interacts with RANBPM.

The protein resides in the cytoplasm. The polypeptide is Protein RMD5 homolog (Arabidopsis thaliana (Mouse-ear cress)).